A 262-amino-acid polypeptide reads, in one-letter code: Ribosomal RNA small subunit methyltransferase A (262 aa).

S-adenosyl-L-methionine-binding residues include His-19, Leu-21, Gly-44, Glu-65, Asp-90, and Asn-109. Positions 218–246 (LPNNLPGPLRERAEEALAGLGHGPDARAE) are disordered.

Belongs to the class I-like SAM-binding methyltransferase superfamily. rRNA adenine N(6)-methyltransferase family. RsmA subfamily.

The protein resides in the cytoplasm. It catalyses the reaction adenosine(1518)/adenosine(1519) in 16S rRNA + 4 S-adenosyl-L-methionine = N(6)-dimethyladenosine(1518)/N(6)-dimethyladenosine(1519) in 16S rRNA + 4 S-adenosyl-L-homocysteine + 4 H(+). Functionally, specifically dimethylates two adjacent adenosines (A1518 and A1519) in the loop of a conserved hairpin near the 3'-end of 16S rRNA in the 30S particle. May play a critical role in biogenesis of 30S subunits. The polypeptide is Ribosomal RNA small subunit methyltransferase A (Rubrobacter xylanophilus (strain DSM 9941 / JCM 11954 / NBRC 16129 / PRD-1)).